Here is a 171-residue protein sequence, read N- to C-terminus: Protein phosphatase 1 regulatory subunit 1A (171 aa).

Position 1 is an N-acetylmethionine (methionine 1). A disordered region spans residues 1–171 (MEPDNSPRKI…PLDSQGASLV (171 aa)). The essential for activity stretch occupies residues 9 to 12 (KIQF). Positions 19–29 (PHLDPEAAEQI) are enriched in basic and acidic residues. A Phosphothreonine modification is found at threonine 35. Residues 42-54 (TSDQSSPEIDEDR) are essential for activity. Serine 43, serine 46, serine 47, and serine 67 each carry phosphoserine. Residues 122–146 (GSASRPDTPGTAQKSAESNPKTQEQ) show a composition bias toward polar residues. Positions 143-171 (TQEQCGVEPRTEDSSAHMLPLDSQGASLV) are interaction with PPP1R15A.

This sequence belongs to the protein phosphatase inhibitor 1 family. Interacts with PPP1R15A. Phosphorylation of Thr-35 is required for activity.

Functionally, inhibitor of protein-phosphatase 1. This protein may be important in hormonal control of glycogen metabolism. Hormones that elevate intracellular cAMP increase I-1 activity in many tissues. I-1 activation may impose cAMP control over proteins that are not directly phosphorylated by PKA. Following a rise in intracellular calcium, I-1 is inactivated by calcineurin (or PP2B). Does not inhibit type-2 phosphatases. The sequence is that of Protein phosphatase 1 regulatory subunit 1A (Ppp1r1a) from Mus musculus (Mouse).